Here is a 256-residue protein sequence, read N- to C-terminus: ATP synthase subunit a (256 aa).

Helical transmembrane passes span 33 to 53 (ITTF…LTLL), 92 to 112 (YFPL…IGMI), 122 to 142 (MVFI…IGLY), 148 to 168 (FFAL…LVLI), 191 to 211 (GHLL…VSIV), and 235 to 255 (MIQS…GLYL).

It belongs to the ATPase A chain family. As to quaternary structure, F-type ATPases have 2 components, CF(1) - the catalytic core - and CF(0) - the membrane proton channel. CF(1) has five subunits: alpha(3), beta(3), gamma(1), delta(1), epsilon(1). CF(0) has three main subunits: a, b and c.

Its subcellular location is the mitochondrion inner membrane. In terms of biological role, mitochondrial membrane ATP synthase (F(1)F(0) ATP synthase or Complex V) produces ATP from ADP in the presence of a proton gradient across the membrane which is generated by electron transport complexes of the respiratory chain. F-type ATPases consist of two structural domains, F(1) - containing the extramembraneous catalytic core and F(0) - containing the membrane proton channel, linked together by a central stalk and a peripheral stalk. During catalysis, ATP synthesis in the catalytic domain of F(1) is coupled via a rotary mechanism of the central stalk subunits to proton translocation. Key component of the proton channel; it may play a direct role in the translocation of protons across the membrane. This is ATP synthase subunit a (ATP6) from Wickerhamomyces canadensis (Yeast).